We begin with the raw amino-acid sequence, 232 residues long: UPF0502 protein Aave_3438 (232 aa).

Belongs to the UPF0502 family.

In Paracidovorax citrulli (strain AAC00-1) (Acidovorax citrulli), this protein is UPF0502 protein Aave_3438.